A 341-amino-acid chain; its full sequence is Glycerol-3-phosphate dehydrogenase [NAD(P)+] (341 aa).

Residues Ser13, Trp14, and Lys108 each contribute to the NADPH site. 3 residues coordinate sn-glycerol 3-phosphate: Lys108, Gly139, and Ser141. Ala143 is a binding site for NADPH. The sn-glycerol 3-phosphate site is built by Lys194, Asp247, Ser257, Arg258, and Asn259. Residue Lys194 is the Proton acceptor of the active site. Arg258 serves as a coordination point for NADPH. Positions 282 and 284 each coordinate NADPH.

It belongs to the NAD-dependent glycerol-3-phosphate dehydrogenase family.

It is found in the cytoplasm. It catalyses the reaction sn-glycerol 3-phosphate + NAD(+) = dihydroxyacetone phosphate + NADH + H(+). The catalysed reaction is sn-glycerol 3-phosphate + NADP(+) = dihydroxyacetone phosphate + NADPH + H(+). It functions in the pathway membrane lipid metabolism; glycerophospholipid metabolism. In terms of biological role, catalyzes the reduction of the glycolytic intermediate dihydroxyacetone phosphate (DHAP) to sn-glycerol 3-phosphate (G3P), the key precursor for phospholipid synthesis. This Lactococcus lactis subsp. lactis (strain IL1403) (Streptococcus lactis) protein is Glycerol-3-phosphate dehydrogenase [NAD(P)+].